The chain runs to 275 residues: Large ribosomal subunit protein uL2 (275 aa).

Residues arginine 214–lysine 275 are disordered. Basic residues predominate over residues lysine 255 to lysine 275.

The protein belongs to the universal ribosomal protein uL2 family. Part of the 50S ribosomal subunit. Forms a bridge to the 30S subunit in the 70S ribosome.

One of the primary rRNA binding proteins. Required for association of the 30S and 50S subunits to form the 70S ribosome, for tRNA binding and peptide bond formation. It has been suggested to have peptidyltransferase activity; this is somewhat controversial. Makes several contacts with the 16S rRNA in the 70S ribosome. This is Large ribosomal subunit protein uL2 from Blochmanniella pennsylvanica (strain BPEN).